Consider the following 259-residue polypeptide: UPF0246 protein VFMJ11_2214 (259 aa).

It belongs to the UPF0246 family.

This Aliivibrio fischeri (strain MJ11) (Vibrio fischeri) protein is UPF0246 protein VFMJ11_2214.